A 285-amino-acid polypeptide reads, in one-letter code: Probable endonuclease 4 (285 aa).

Positions 69, 109, 145, 179, 182, 216, 229, 231, and 261 each coordinate Zn(2+).

The protein belongs to the AP endonuclease 2 family. Requires Zn(2+) as cofactor.

The catalysed reaction is Endonucleolytic cleavage to 5'-phosphooligonucleotide end-products.. Its function is as follows. Endonuclease IV plays a role in DNA repair. It cleaves phosphodiester bonds at apurinic or apyrimidinic (AP) sites, generating a 3'-hydroxyl group and a 5'-terminal sugar phosphate. The polypeptide is Probable endonuclease 4 (Salmonella newport (strain SL254)).